The following is a 348-amino-acid chain: Histidinol-phosphate aminotransferase (348 aa).

The residue at position 211 (Lys211) is an N6-(pyridoxal phosphate)lysine.

This sequence belongs to the class-II pyridoxal-phosphate-dependent aminotransferase family. Histidinol-phosphate aminotransferase subfamily. In terms of assembly, homodimer. Pyridoxal 5'-phosphate is required as a cofactor.

It carries out the reaction L-histidinol phosphate + 2-oxoglutarate = 3-(imidazol-4-yl)-2-oxopropyl phosphate + L-glutamate. It functions in the pathway amino-acid biosynthesis; L-histidine biosynthesis; L-histidine from 5-phospho-alpha-D-ribose 1-diphosphate: step 7/9. In Chlorobaculum tepidum (strain ATCC 49652 / DSM 12025 / NBRC 103806 / TLS) (Chlorobium tepidum), this protein is Histidinol-phosphate aminotransferase.